A 121-amino-acid chain; its full sequence is Anther-specific protein SF2 (121 aa).

Residues 1–21 (MANNSVSYLVLLLLVFVLAIS) form the signal peptide. N-linked (GlcNAc...) asparagine glycosylation occurs at Asn115.

In terms of tissue distribution, epidermal anther cells.

It localises to the secreted. It is found in the cell wall. Functionally, anther-specific cell wall protein which could contribute to the cell wall architecture of epidermal anther cells via intermolecular disulfide bridges. This is Anther-specific protein SF2 from Helianthus annuus (Common sunflower).